We begin with the raw amino-acid sequence, 357 residues long: S-adenosyl-L-methionine:benzoic acid/salicylic acid carboxyl methyltransferase 1 (357 aa).

Tyr-18 contributes to the S-adenosyl-L-homocysteine binding site. Residue Gln-25 participates in benzoate binding. 6 residues coordinate S-adenosyl-L-homocysteine: Cys-59, Asn-64, Asp-96, Leu-97, Ser-135, and Phe-136. Position 157 (Trp-157) interacts with benzoate. Mg(2+) contacts are provided by Asn-168, Asp-254, Phe-256, and Asn-257. Gln-260 lines the benzoate pocket.

This sequence belongs to the methyltransferase superfamily. Type-7 methyltransferase family. As to expression, predominantly expressed in petal limbs and tubes of corollas.

It carries out the reaction benzoate + S-adenosyl-L-methionine = methyl benzoate + S-adenosyl-L-homocysteine. It catalyses the reaction salicylate + S-adenosyl-L-methionine = methyl salicylate + S-adenosyl-L-homocysteine. It functions in the pathway aromatic compound metabolism. In terms of biological role, converts benzoic acid into the volatile ester methyl benzoates. This scent, mostly produced in a rhythmical, diurnal manner, attracts the pollinators. The polypeptide is S-adenosyl-L-methionine:benzoic acid/salicylic acid carboxyl methyltransferase 1 (Petunia hybrida (Petunia)).